The primary structure comprises 453 residues: Indoleamine 2,3-dioxygenase (453 aa).

A heme-binding site is contributed by His-331.

The protein belongs to the indoleamine 2,3-dioxygenase family. Requires heme as cofactor.

It catalyses the reaction D-tryptophan + O2 = N-formyl-D-kynurenine. The catalysed reaction is L-tryptophan + O2 = N-formyl-L-kynurenine. Its pathway is cofactor biosynthesis; NAD(+) biosynthesis. Its function is as follows. Catalyzes the first step in tryptophan catabolism in order to supply de novo nicotinamide adenine dinucleotide (NAD(+)) via the kynurenine pathway. Plays a role in the cellular response to telomere uncapping. The protein is Indoleamine 2,3-dioxygenase (BNA2) of Saccharomyces cerevisiae (strain ATCC 204508 / S288c) (Baker's yeast).